Here is a 436-residue protein sequence, read N- to C-terminus: Serine--tRNA ligase (436 aa).

Residues 43–55 (TKSEQLKQKRNEV) are compositionally biased toward basic and acidic residues. Positions 43 to 69 (TKSEQLKQKRNEVSDQIAQAKRNKEDA) are disordered. 237–239 (TAE) lines the L-serine pocket. Residue 268–270 (RSE) participates in ATP binding. Glutamate 291 contributes to the L-serine binding site. 355–358 (EISS) is an ATP binding site. L-serine is bound at residue serine 390.

It belongs to the class-II aminoacyl-tRNA synthetase family. Type-1 seryl-tRNA synthetase subfamily. Homodimer. The tRNA molecule binds across the dimer.

The protein localises to the cytoplasm. It carries out the reaction tRNA(Ser) + L-serine + ATP = L-seryl-tRNA(Ser) + AMP + diphosphate + H(+). The catalysed reaction is tRNA(Sec) + L-serine + ATP = L-seryl-tRNA(Sec) + AMP + diphosphate + H(+). Its pathway is aminoacyl-tRNA biosynthesis; selenocysteinyl-tRNA(Sec) biosynthesis; L-seryl-tRNA(Sec) from L-serine and tRNA(Sec): step 1/1. Its function is as follows. Catalyzes the attachment of serine to tRNA(Ser). Is also able to aminoacylate tRNA(Sec) with serine, to form the misacylated tRNA L-seryl-tRNA(Sec), which will be further converted into selenocysteinyl-tRNA(Sec). In Lactobacillus gasseri (strain ATCC 33323 / DSM 20243 / BCRC 14619 / CIP 102991 / JCM 1131 / KCTC 3163 / NCIMB 11718 / NCTC 13722 / AM63), this protein is Serine--tRNA ligase.